The sequence spans 114 residues: Putative protein TfaS (114 aa).

This sequence belongs to the tfa family.

This chain is Putative protein TfaS (tfaS), found in Escherichia coli (strain K12).